Consider the following 657-residue polypeptide: MRLKIGFILRSLLVVGSFLGLVVLWSSLTPRPDDPSPLSRMREDRDVNDPMPNRGGNGLAPGEDRFKPVVPWPHVEGVEVDLESIRRINKAKNEQEHHAGGDSQKDIMQRQYLTFKPQTFTYHDPVLRPGILGNFEPKEPEPPGVVGGPGEKAKPLVLGPEFKQAIQASIKEFGFNMVASDMISLDRSVNDLRQEECKYWHYDENLLTSSVVIVFHNEGWSTLMRTVHSVIKRTPRKYLAEIVLIDDFSNKEHLKEKLDEYIKLWNGLVKVFRNERREGLIQARSIGAQKAKLGQVLIYLDAHCEVAVNWYAPLVAPISKDRTICTVPLIDVINGNTYEIIPQGGGDEDGYARGAWDWSMLWKRVPLTPQEKRLRKTKTEPYRSPAMAGGLFAIEREFFFELGLYDPGLQIWGGENFEISYKIWQCGGKLLFVPCSRVGHIYRLEGWQGNPPPIYVGSSPTLKNYVRVVEVWWDEYKDYFYASRPESQALPYGDISELKKFREDHNCKSFKWFMEEIAYDITSHYPLPPKNVDWGEIRGFETAYCIDSMGKTNGGFVELGPCHRMGGNQLFRINEANQLMQYDQCLTKGADGSKVMITHCNLNEFKEWQYFKNLHRFTHIPSGKCLDRSEVLHQVFISNCDSSKTTQKWEMNNIHSV.

Residues 1–6 (MRLKIG) are Cytoplasmic-facing. A helical; Signal-anchor for type II membrane protein transmembrane segment spans residues 7–29 (FILRSLLVVGSFLGLVVLWSSLT). At 30 to 657 (PRPDDPSPLS…KWEMNNIHSV (628 aa)) the chain is on the lumenal side. The tract at residues 31–65 (RPDDPSPLSRMREDRDVNDPMPNRGGNGLAPGEDR) is disordered. 5 cysteine pairs are disulfide-bonded: Cys197-Cys435, Cys426-Cys507, Cys545-Cys562, Cys585-Cys600, and Cys625-Cys640. Residues 206 to 317 (LLTSSVVIVF…VNWYAPLVAP (112 aa)) are catalytic subdomain A. Positions 247 and 277 each coordinate substrate. Mn(2+) contacts are provided by Asp301 and His303. Positions 381–443 (PYRSPAMAGG…PCSRVGHIYR (63 aa)) are catalytic subdomain B. Trp412 lines the substrate pocket. Position 440 (His440) interacts with Mn(2+). A substrate-binding site is contributed by Arg443. A Ricin B-type lectin domain is found at 532–652 (VDWGEIRGFE…SKTTQKWEMN (121 aa)).

This sequence belongs to the glycosyltransferase 2 family. GalNAc-T subfamily. The cofactor is Mn(2+). Widely expressed. Expressed in uterus, retina, kidney, small intestine, omentum, stomach and CNS.

Its subcellular location is the golgi apparatus membrane. The catalysed reaction is L-seryl-[protein] + UDP-N-acetyl-alpha-D-galactosamine = a 3-O-[N-acetyl-alpha-D-galactosaminyl]-L-seryl-[protein] + UDP + H(+). It carries out the reaction L-threonyl-[protein] + UDP-N-acetyl-alpha-D-galactosamine = a 3-O-[N-acetyl-alpha-D-galactosaminyl]-L-threonyl-[protein] + UDP + H(+). Its pathway is protein modification; protein glycosylation. Its function is as follows. Glycopeptide transferase involved in O-linked oligosaccharide biosynthesis, which catalyzes the transfer of an N-acetyl-D-galactosamine residue to an already glycosylated peptide. In contrast to other proteins of the family, it does not act as a peptide transferase that transfers GalNAc onto serine or threonine residue on the protein receptor, but instead requires the prior addition of a GalNAc on a peptide before adding additional GalNAc moieties. Some peptide transferase activity is however not excluded, considering that its appropriate peptide substrate may remain unidentified. This Homo sapiens (Human) protein is N-acetylgalactosaminyltransferase 7 (GALNT7).